We begin with the raw amino-acid sequence, 391 residues long: MESLKEMRKAQMSEGPAAILAIGTATPNNVYMQADYPDYYFRMTKSEHMTELKDKFRTLCEKSMIRKRHMCFSEEFLKANPEVSKHMGKSLNARQDIAVVETPRLGNEAAVKAIKEWGQPKSSITHLIFCSSAGVDMPGADYQLTRILGLNPSVKRMMVYQQGCYAGGTVLRLAKDLAENNKGSRVLVVCSELTAPTFRGPSPDAVDSLVGQALFADGAAALVVGADPDSSIERALYYLVSASQMLLPDSDGAIEGHIREEGLTVHLKKDVPALFSANIDTPLVEAFKPLGISDWNSIFWIAHPGGPAILDQIEEKLGLKEDKLRASKHVMSEYGNMSSSCVLFVLDEMRSRSLQDGKSTTGEGLDWGVLFGFGPGLTVETVVLRSVPIEA.

Residue C164 is part of the active site.

Belongs to the thiolase-like superfamily. Chalcone/stilbene synthases family.

It catalyses the reaction N-methylanthraniloyl-CoA + 3 malonyl-CoA + 3 H(+) = 1,3-dihydroxy-N-methylacridone + 3 CO2 + 4 CoA + H2O. The polypeptide is Probable acridone synthase 4 (ACS4) (Ruta graveolens (Common rue)).